The primary structure comprises 114 residues: Ribosome-binding factor A (114 aa).

This sequence belongs to the RbfA family. As to quaternary structure, monomer. Binds 30S ribosomal subunits, but not 50S ribosomal subunits or 70S ribosomes.

The protein resides in the cytoplasm. Functionally, one of several proteins that assist in the late maturation steps of the functional core of the 30S ribosomal subunit. Associates with free 30S ribosomal subunits (but not with 30S subunits that are part of 70S ribosomes or polysomes). Required for efficient processing of 16S rRNA. May interact with the 5'-terminal helix region of 16S rRNA. The polypeptide is Ribosome-binding factor A (Phytoplasma mali (strain AT)).